A 511-amino-acid chain; its full sequence is Signal transduction histidine-protein kinase/phosphatase MprB (511 aa).

Residues methionine 1–leucine 26 are Cytoplasmic-facing. The chain crosses the membrane as a helical span at residues leucine 27 to isoleucine 47. The Extracellular segment spans residues serine 48 to arginine 163. The helical transmembrane segment at alanine 164 to valine 184 threads the bilayer. Residues threonine 185–arginine 511 lie on the Cytoplasmic side of the membrane. The region spanning arginine 186–glutamate 238 is the HAMP domain. One can recognise a Histidine kinase domain in the interval aspartate 246 to proline 466. Histidine 249 is modified (phosphohistidine; by autocatalysis). The disordered stretch occupies residues proline 468–arginine 511. Basic and acidic residues predominate over residues proline 476–aspartate 485. The segment covering glycine 491 to arginine 511 has biased composition (polar residues).

It depends on Mg(2+) as a cofactor. Requires Mn(2+) as cofactor. Autophosphorylated.

Its subcellular location is the cell membrane. The enzyme catalyses ATP + protein L-histidine = ADP + protein N-phospho-L-histidine.. Its function is as follows. Member of the two-component regulatory system MprB/MprA which contributes to maintaining a balance among several systems involved in stress resistance and is required for establishment and maintenance of persistent infection in the host. In response to environmental signals MprB acts both as a membrane-associated protein kinase that undergoes autophosphorylation and subsequently transfers the phosphate to MprA, and a protein phosphatase that dephosphorylates phospho-MprA. This chain is Signal transduction histidine-protein kinase/phosphatase MprB (mprB), found in Mycobacterium ulcerans (strain Agy99).